The following is a 400-amino-acid chain: Iron(III) enterobactin esterase (400 aa).

Belongs to the Fes family.

It localises to the cytoplasm. It catalyses the reaction Fe(III)-enterobactin + 3 H2O + H(+) = Fe(III)-[N-(2,3-dihydroxybenzoyl)-L-serine] + 2 N-(2,3-dihydroxybenzoyl)-L-serine. It carries out the reaction Fe(III)-enterobactin + H2O = Fe(III)-[N-(2,3-dihydroxybenzoyl)-L-serine]3 + H(+). The catalysed reaction is Fe(III)-[N-(2,3-dihydroxybenzoyl)-L-serine]3 + H2O + H(+) = Fe(III)-[N-(2,3-dihydroxybenzoyl)-L-serine]2 + N-(2,3-dihydroxybenzoyl)-L-serine. The enzyme catalyses Fe(III)-[N-(2,3-dihydroxybenzoyl)-L-serine]2 + H2O + H(+) = Fe(III)-[N-(2,3-dihydroxybenzoyl)-L-serine] + N-(2,3-dihydroxybenzoyl)-L-serine. It catalyses the reaction enterobactin + 3 H2O = 3 N-(2,3-dihydroxybenzoyl)-L-serine + 2 H(+). Catalyzes the hydrolysis of ferric enterobactin (Fe-Ent). Is responsible for the release of iron from ferric enterobactin. Also catalyzes the hydrolysis of iron-free enterobactin (Ent). Hydrolyzes ferric monoglucosyl-C-Ent (Fe-MGE) poorly and does not hydrolyze ferric diglucosyl-C-Ent (Fe-DGE) or ferric triglucosyl-C-Ent (Fe-TGE) at all. Also hydrolyzes apo MGE, but catalyzes the hydrolysis of apo DGE very poorly, and does not process apo TGE at all. The catalytic efficiency for processing Fe-Ent is much higher than that for apo Ent, suggesting that Fe-Ent is the physiological substrate. This is Iron(III) enterobactin esterase from Escherichia coli O6:H1 (strain CFT073 / ATCC 700928 / UPEC).